The following is a 517-amino-acid chain: Putative pumilio homolog 21 (517 aa).

4 disordered regions span residues 33–57, 69–94, 107–130, and 175–201; these read NHQE…PPLL, KNNQ…PPLV, NHQE…PLLT, and FTPS…PPLS. Residues 42–51 are compositionally biased toward low complexity; it reads NTNINSNNNH. A compositionally biased stretch (polar residues) spans 69–84; it reads KNNQEPGESGNTTINR. A PUM-HD domain is found at 148-502; that stretch reads ESSNNNYPNL…NTLRVIQEEI (355 aa). Positions 177-190 are enriched in polar residues; that stretch reads PSSLTQPDDSSSRY. The stretch at 258 to 293 is one Pumilio 1; degenerate repeat; the sequence is TTKRIFLHLATNQYGSQALRILFRRSPSLDHLLFCA. A Pumilio 2 repeat occupies 294 to 328; that stretch reads VDTNFFLLMSDKYGRGLIIPAIRAVDKTKKESLYK. One copy of the Pumilio 3; degenerate repeat lies at 329-363; sequence LTYEYTLHLARLETGCLALNNVLQEIRGIYRDLIF. Pumilio repeat units lie at residues 364–400, 401–437, and 438–473; these read ECVA…AIAE, RLRG…EEFR, and GNAK…PLLR.

It localises to the cytoplasm. Its function is as follows. Sequence-specific RNA-binding protein that regulates translation and mRNA stability by binding the 3'-UTR of target mRNAs. This chain is Putative pumilio homolog 21 (APUM21), found in Arabidopsis thaliana (Mouse-ear cress).